Here is a 337-residue protein sequence, read N- to C-terminus: Protein BIG GRAIN 1-like (337 aa).

3 disordered regions span residues 1–32 (MRDM…PSFS), 120–163 (SAAG…RPAS), and 179–235 (KRPS…PSRS). Positions 137-146 (HEQPDVEKTA) are enriched in basic and acidic residues. Composition is skewed to low complexity over residues 150-163 (PGSA…RPAS) and 195-209 (PACS…SSYA).

It belongs to the BIG GRAIN 1 (BG1) plant protein family.

It is found in the cell membrane. Functionally, involved in auxin transport. Regulator of the auxin signaling pathway. The sequence is that of Protein BIG GRAIN 1-like from Oryza sativa subsp. japonica (Rice).